The chain runs to 148 residues: Protein NrdI (148 aa).

This sequence belongs to the NrdI family.

In terms of biological role, probably involved in ribonucleotide reductase function. The sequence is that of Protein NrdI from Corynebacterium glutamicum (strain R).